The following is a 502-amino-acid chain: ATP synthase subunit alpha (502 aa).

169–176 (GDRQTGKT) provides a ligand contact to ATP.

It belongs to the ATPase alpha/beta chains family. F-type ATPases have 2 components, CF(1) - the catalytic core - and CF(0) - the membrane proton channel. CF(1) has five subunits: alpha(3), beta(3), gamma(1), delta(1), epsilon(1). CF(0) has three main subunits: a(1), b(2) and c(9-12). The alpha and beta chains form an alternating ring which encloses part of the gamma chain. CF(1) is attached to CF(0) by a central stalk formed by the gamma and epsilon chains, while a peripheral stalk is formed by the delta and b chains.

It localises to the cell membrane. The catalysed reaction is ATP + H2O + 4 H(+)(in) = ADP + phosphate + 5 H(+)(out). In terms of biological role, produces ATP from ADP in the presence of a proton gradient across the membrane. The alpha chain is a regulatory subunit. The protein is ATP synthase subunit alpha of Streptococcus pyogenes serotype M12 (strain MGAS9429).